Consider the following 215-residue polypeptide: tRNA (guanine-N(7)-)-methyltransferase (215 aa).

Positions 44, 69, 96, and 118 each coordinate S-adenosyl-L-methionine. Aspartate 118 is a catalytic residue. Lysine 122 is a substrate binding site. The interval 124 to 129 (RHEKRR) is interaction with RNA. Substrate-binding positions include aspartate 154 and 192–195 (TEYE).

This sequence belongs to the class I-like SAM-binding methyltransferase superfamily. TrmB family.

The catalysed reaction is guanosine(46) in tRNA + S-adenosyl-L-methionine = N(7)-methylguanosine(46) in tRNA + S-adenosyl-L-homocysteine. The protein operates within tRNA modification; N(7)-methylguanine-tRNA biosynthesis. Functionally, catalyzes the formation of N(7)-methylguanine at position 46 (m7G46) in tRNA. This is tRNA (guanine-N(7)-)-methyltransferase from Limosilactobacillus fermentum (strain NBRC 3956 / LMG 18251) (Lactobacillus fermentum).